The primary structure comprises 184 residues: ATP synthase subunit b, chloroplastic (184 aa).

A helical transmembrane segment spans residues 27–49 (LATNPINLSVVLGVLIFFGKGVL).

The protein belongs to the ATPase B chain family. F-type ATPases have 2 components, F(1) - the catalytic core - and F(0) - the membrane proton channel. F(1) has five subunits: alpha(3), beta(3), gamma(1), delta(1), epsilon(1). F(0) has four main subunits: a(1), b(1), b'(1) and c(10-14). The alpha and beta chains form an alternating ring which encloses part of the gamma chain. F(1) is attached to F(0) by a central stalk formed by the gamma and epsilon chains, while a peripheral stalk is formed by the delta, b and b' chains.

It is found in the plastid. The protein resides in the chloroplast thylakoid membrane. Functionally, f(1)F(0) ATP synthase produces ATP from ADP in the presence of a proton or sodium gradient. F-type ATPases consist of two structural domains, F(1) containing the extramembraneous catalytic core and F(0) containing the membrane proton channel, linked together by a central stalk and a peripheral stalk. During catalysis, ATP synthesis in the catalytic domain of F(1) is coupled via a rotary mechanism of the central stalk subunits to proton translocation. In terms of biological role, component of the F(0) channel, it forms part of the peripheral stalk, linking F(1) to F(0). This Platanus occidentalis (Sycamore) protein is ATP synthase subunit b, chloroplastic.